The chain runs to 153 residues: Large ribosomal subunit protein uL22 (153 aa).

The tract at residues 125–153 (EPKEARQARKKAKSGRPAAAAKSETEKGA) is disordered.

Belongs to the universal ribosomal protein uL22 family. In terms of assembly, part of the 50S ribosomal subunit.

Its function is as follows. This protein binds specifically to 23S rRNA; its binding is stimulated by other ribosomal proteins, e.g. L4, L17, and L20. It is important during the early stages of 50S assembly. It makes multiple contacts with different domains of the 23S rRNA in the assembled 50S subunit and ribosome. Functionally, the globular domain of the protein is located near the polypeptide exit tunnel on the outside of the subunit, while an extended beta-hairpin is found that lines the wall of the exit tunnel in the center of the 70S ribosome. In Cutibacterium acnes (strain DSM 16379 / KPA171202) (Propionibacterium acnes), this protein is Large ribosomal subunit protein uL22.